A 69-amino-acid polypeptide reads, in one-letter code: DNA gyrase inhibitor YacG (69 aa).

Cys-7, Cys-10, Cys-26, and Cys-30 together coordinate Zn(2+).

It belongs to the DNA gyrase inhibitor YacG family. Interacts with GyrB. The cofactor is Zn(2+).

Inhibits all the catalytic activities of DNA gyrase by preventing its interaction with DNA. Acts by binding directly to the C-terminal domain of GyrB, which probably disrupts DNA binding by the gyrase. This chain is DNA gyrase inhibitor YacG, found in Shewanella baltica (strain OS223).